A 435-amino-acid chain; its full sequence is Glutamine synthetase (435 aa).

The region spanning 12–94 (KGVKYFMISY…VAADCIMDDA (83 aa)) is the GS beta-grasp domain. Residues 100-435 (PRVVLKKLVA…EWEHQTTLDV (336 aa)) enclose the GS catalytic domain. Glutamate 123, glutamate 125, glutamate 180, and glutamate 187 together coordinate Mg(2+). Glycine 232 is an L-glutamate binding site. Position 236 (histidine 236) interacts with Mg(2+). Position 240 (serine 240) interacts with ATP. L-glutamate contacts are provided by arginine 291 and arginine 315. Positions 315 and 320 each coordinate ATP. Glutamate 328 is a binding site for Mg(2+). An L-glutamate-binding site is contributed by arginine 330.

This sequence belongs to the glutamine synthetase family. In terms of assembly, homooctamer. Mg(2+) is required as a cofactor.

The catalysed reaction is L-glutamate + NH4(+) + ATP = L-glutamine + ADP + phosphate + H(+). Its activity is regulated as follows. Inhibited by methionine sulfoximine, ADP and pyrophosphate, but not by various nitrogen-containing metabolites that inhibit other GS enzymes. Its function is as follows. Catalyzes the ATP-dependent biosynthesis of glutamine from glutamate and ammonia. In Rhizobium meliloti (strain 1021) (Ensifer meliloti), this protein is Glutamine synthetase.